The sequence spans 841 residues: DNA mismatch repair protein MutS (841 aa).

600–607 lines the ATP pocket; sequence GPNMAGKS.

Belongs to the DNA mismatch repair MutS family.

Functionally, this protein is involved in the repair of mismatches in DNA. It is possible that it carries out the mismatch recognition step. This protein has a weak ATPase activity. The polypeptide is DNA mismatch repair protein MutS (Carboxydothermus hydrogenoformans (strain ATCC BAA-161 / DSM 6008 / Z-2901)).